Consider the following 261-residue polypeptide: Adenosylcobinamide-GDP ribazoletransferase (261 aa).

7 consecutive transmembrane segments (helical) span residues 9 to 29 (LELF…VSLP), 41 to 61 (YFAL…SLAT), 64 to 84 (FSTN…TGAF), 114 to 134 (IGTY…LLLT), 141 to 161 (SLVP…ASLI), 196 to 216 (ATLL…SLIF), and 235 to 255 (CLGA…LAFL).

Belongs to the CobS family. The cofactor is Mg(2+).

Its subcellular location is the cell inner membrane. It carries out the reaction alpha-ribazole + adenosylcob(III)inamide-GDP = adenosylcob(III)alamin + GMP + H(+). The enzyme catalyses alpha-ribazole 5'-phosphate + adenosylcob(III)inamide-GDP = adenosylcob(III)alamin 5'-phosphate + GMP + H(+). Its pathway is cofactor biosynthesis; adenosylcobalamin biosynthesis; adenosylcobalamin from cob(II)yrinate a,c-diamide: step 7/7. In terms of biological role, joins adenosylcobinamide-GDP and alpha-ribazole to generate adenosylcobalamin (Ado-cobalamin). Also synthesizes adenosylcobalamin 5'-phosphate from adenosylcobinamide-GDP and alpha-ribazole 5'-phosphate. The polypeptide is Adenosylcobinamide-GDP ribazoletransferase (Vibrio cholerae serotype O1 (strain ATCC 39541 / Classical Ogawa 395 / O395)).